Reading from the N-terminus, the 121-residue chain is Small ribosomal subunit protein uS13 (121 aa).

The disordered stretch occupies residues 91 to 121 (HRRGLPVRGQNSKNNARTRKGPRRTVANKKK). Basic residues predominate over residues 106 to 121 (ARTRKGPRRTVANKKK).

This sequence belongs to the universal ribosomal protein uS13 family. As to quaternary structure, part of the 30S ribosomal subunit. Forms a loose heterodimer with protein S19. Forms two bridges to the 50S subunit in the 70S ribosome.

Functionally, located at the top of the head of the 30S subunit, it contacts several helices of the 16S rRNA. In the 70S ribosome it contacts the 23S rRNA (bridge B1a) and protein L5 of the 50S subunit (bridge B1b), connecting the 2 subunits; these bridges are implicated in subunit movement. Contacts the tRNAs in the A and P-sites. This Bacillus mycoides (strain KBAB4) (Bacillus weihenstephanensis) protein is Small ribosomal subunit protein uS13.